Consider the following 131-residue polypeptide: Jacalin-related lectin 15 (131 aa).

Residues 1–126 form the Jacalin-type lectin domain; it reads MSTPSGSNPL…LTSLGAYFAP (126 aa).

This sequence belongs to the jacalin lectin family. Expressed in the vascular and surrounding tissues in cotyledons. Detected in root apical meristems.

The polypeptide is Jacalin-related lectin 15 (JAL15) (Arabidopsis thaliana (Mouse-ear cress)).